The primary structure comprises 264 residues: S-adenosylmethionine decarboxylase proenzyme (264 aa).

S112 (schiff-base intermediate with substrate; via pyruvic acid) is an active-site residue. S112 is subject to Pyruvic acid (Ser); by autocatalysis. H117 serves as the catalytic Proton acceptor; for processing activity. C140 functions as the Proton donor; for catalytic activity in the catalytic mechanism.

It belongs to the prokaryotic AdoMetDC family. Type 2 subfamily. As to quaternary structure, heterooctamer of four alpha and four beta chains arranged as a tetramer of alpha/beta heterodimers. Pyruvate is required as a cofactor. Is synthesized initially as an inactive proenzyme. Formation of the active enzyme involves a self-maturation process in which the active site pyruvoyl group is generated from an internal serine residue via an autocatalytic post-translational modification. Two non-identical subunits are generated from the proenzyme in this reaction, and the pyruvate is formed at the N-terminus of the alpha chain, which is derived from the carboxyl end of the proenzyme. The post-translation cleavage follows an unusual pathway, termed non-hydrolytic serinolysis, in which the side chain hydroxyl group of the serine supplies its oxygen atom to form the C-terminus of the beta chain, while the remainder of the serine residue undergoes an oxidative deamination to produce ammonia and the pyruvoyl group blocking the N-terminus of the alpha chain.

It carries out the reaction S-adenosyl-L-methionine + H(+) = S-adenosyl 3-(methylsulfanyl)propylamine + CO2. It functions in the pathway amine and polyamine biosynthesis; S-adenosylmethioninamine biosynthesis; S-adenosylmethioninamine from S-adenosyl-L-methionine: step 1/1. Its function is as follows. Catalyzes the decarboxylation of S-adenosylmethionine to S-adenosylmethioninamine (dcAdoMet), the propylamine donor required for the synthesis of the polyamines spermine and spermidine from the diamine putrescine. This chain is S-adenosylmethionine decarboxylase proenzyme, found in Shigella boydii serotype 4 (strain Sb227).